The primary structure comprises 312 residues: tRNA pseudouridine synthase B (312 aa).

Aspartate 48 (nucleophile) is an active-site residue.

Belongs to the pseudouridine synthase TruB family. Type 1 subfamily.

The catalysed reaction is uridine(55) in tRNA = pseudouridine(55) in tRNA. In terms of biological role, responsible for synthesis of pseudouridine from uracil-55 in the psi GC loop of transfer RNAs. The polypeptide is tRNA pseudouridine synthase B (Haemophilus influenzae (strain ATCC 51907 / DSM 11121 / KW20 / Rd)).